Consider the following 231-residue polypeptide: Quercetin 2,3-dioxygenase (231 aa).

A divalent metal cation-binding residues include His57, His59, His101, and Glu103.

This sequence belongs to the pirin family. Requires Zn(2+) as cofactor. Co(2+) serves as cofactor. It depends on Fe(2+) as a cofactor.

It catalyses the reaction quercetin + O2 = 2-(3,4-dihydroxybenzoyloxy)-4,6-dihydroxybenzoate + CO. It functions in the pathway flavonoid metabolism; quercetin degradation. Has quercetin 2,3-dioxygenase activity in vitro. Its physiological role is unknown; however, may provide a mechanism that would avoid inhibition of key cellular proteins, such as DNA gyrase, by quercetin. This is Quercetin 2,3-dioxygenase (yhhW) from Escherichia coli O157:H7.